Reading from the N-terminus, the 815-residue chain is Heme-copper oxidase subunit I+III (815 aa).

The segment at 1 to 467 is COX1; it reads MVSRLRGFLA…QLSTLGAFIF (467 aa). Residues 26–46 traverse the membrane as a helical segment; the sequence is LLYLVTSIAFLLIAGSLALLF. Fe(II)-heme a is bound at residue His-70. The next 18 membrane-spanning stretches (helical) occupy residues 71 to 91, 105 to 125, 157 to 177, 197 to 217, 242 to 262, 281 to 301, 314 to 334, 339 to 359, 380 to 400, 419 to 439, 463 to 483, 580 to 600, 637 to 657, 683 to 703, 708 to 728, 736 to 756, 758 to 778, and 791 to 811; these read GLIM…NYIV, LNAL…ASFF, LAIF…LVTI, ILFT…GGAL, LFWF…LGAM, LTAF…HMFI, ITTI…IFTL, LVYT…IIGG, VVAH…IAGL, IHFA…FALM, GAFI…YSLV, ALFG…VFLL, WVFI…YFFI, LINT…YLGV, YLIT…FLTV, LLIA…YVTT, AHAL…VKLF, and VLAV…VFPL. Cu cation is bound by residues His-248, Tyr-252, His-297, and His-298. A cross-link (1'-histidyl-3'-tyrosine (His-Tyr)) is located at residues 248–252; that stretch reads HPEVY. Position 383 (His-383) interacts with heme a3. His-385 contributes to the Fe(II)-heme a binding site. The interval 545–815 is COX3; it reads DVSNVPLSGG…TLVFPLYYLV (271 aa).

In the N-terminal section; belongs to the heme-copper respiratory oxidase family. The protein in the C-terminal section; belongs to the cytochrome c oxidase subunit 3 family. Heme is required as a cofactor. It depends on Cu cation as a cofactor.

It is found in the cell membrane. In Aeropyrum pernix (strain ATCC 700893 / DSM 11879 / JCM 9820 / NBRC 100138 / K1), this protein is Heme-copper oxidase subunit I+III (aoxB).